A 753-amino-acid polypeptide reads, in one-letter code: 5-methyltetrahydropteroyltriglutamate--homocysteine methyltransferase (753 aa).

Residues 17 to 20 and lysine 117 each bind 5-methyltetrahydropteroyltri-L-glutamate; that span reads RELK. L-homocysteine is bound by residues 431 to 433 and glutamate 484; that span reads IGS. Residues 431–433 and glutamate 484 each bind L-methionine; that span reads IGS. 5-methyltetrahydropteroyltri-L-glutamate is bound by residues 515–516 and tryptophan 561; that span reads RC. Aspartate 599 is a binding site for L-homocysteine. Aspartate 599 is an L-methionine binding site. Glutamate 605 contributes to the 5-methyltetrahydropteroyltri-L-glutamate binding site. Residues histidine 641, cysteine 643, and glutamate 665 each contribute to the Zn(2+) site. Histidine 694 (proton donor) is an active-site residue. Cysteine 726 contacts Zn(2+).

It belongs to the vitamin-B12 independent methionine synthase family. Zn(2+) is required as a cofactor.

The enzyme catalyses 5-methyltetrahydropteroyltri-L-glutamate + L-homocysteine = tetrahydropteroyltri-L-glutamate + L-methionine. The protein operates within amino-acid biosynthesis; L-methionine biosynthesis via de novo pathway; L-methionine from L-homocysteine (MetE route): step 1/1. Its function is as follows. Catalyzes the transfer of a methyl group from 5-methyltetrahydrofolate to homocysteine resulting in methionine formation. The chain is 5-methyltetrahydropteroyltriglutamate--homocysteine methyltransferase from Citrobacter koseri (strain ATCC BAA-895 / CDC 4225-83 / SGSC4696).